A 760-amino-acid chain; its full sequence is MOXD1 homolog 2 (760 aa).

The interval 1 to 34 (MAHPRKAVATPATLQLGPPAQTAQSPAATLRHSR) is disordered. Residues 18–34 (PPAQTAQSPAATLRHSR) are compositionally biased toward low complexity. A helical transmembrane segment spans residues 47-67 (CFISCHTFNLFLLLLLLASGV). 3 N-linked (GlcNAc...) asparagine glycosylation sites follow: asparagine 78, asparagine 198, and asparagine 223. Residues 117 to 233 (DDFRILWQII…DTMRLLYMYH (117 aa)) enclose the DOMON domain. 3 disulfides stabilise this stretch: cysteine 339-cysteine 367, cysteine 467-cysteine 581, and cysteine 543-cysteine 565. Asparagine 668 carries an N-linked (GlcNAc...) asparagine glycan. The tract at residues 678 to 701 (RCKPKRPLAPPTERTAPPPASDLS) is disordered. The chain crosses the membrane as a helical span at residues 740-760 (FISCLLWLGASSWWLLLMLRT).

This sequence belongs to the copper type II ascorbate-dependent monooxygenase family.

Its subcellular location is the membrane. This Drosophila melanogaster (Fruit fly) protein is MOXD1 homolog 2 (olf413).